Reading from the N-terminus, the 296-residue chain is uncharacterized protein (296 aa).

The N-terminal 57 residues, 1–57 (MTSFLSFSAISAHPPTFSGASFRPRSFSPRLFKSCVKCTYAEAGLSSASWSAPIDIV), are a transit peptide targeting the chloroplast.

The protein belongs to the NAD(P)-dependent epimerase/dehydratase family.

Its subcellular location is the plastid. It localises to the chloroplast. It is found in the plastoglobule. This is an uncharacterized protein from Arabidopsis thaliana (Mouse-ear cress).